The following is a 317-amino-acid chain: Mitochondrial thiamine pyrophosphate carrier 1 (317 aa).

A run of 6 helical transmembrane segments spans residues 21–41, 86–106, 122–142, 176–196, 207–227, and 281–300; these read AVSG…ARSV, VPAS…YAWL, LAVG…LDLL, GGAW…GIYE, LPWL…AAVF, and GLTM…LWVY. 3 Solcar repeats span residues 22–109, 116–201, and 206–306; these read VSGL…LNTA, PPQA…CTIA, and GLPW…CLRL.

This sequence belongs to the mitochondrial carrier (TC 2.A.29) family.

The protein localises to the mitochondrion inner membrane. In terms of biological role, mitochondrial transporter that mediates uptake of thiamine pyrophosphate (ThPP) into mitochondria. The sequence is that of Mitochondrial thiamine pyrophosphate carrier 1 (TPC1) from Eremothecium gossypii (strain ATCC 10895 / CBS 109.51 / FGSC 9923 / NRRL Y-1056) (Yeast).